The following is a 401-amino-acid chain: L-rhamnonate dehydratase (401 aa).

The substrate site is built by His29 and Arg55. Residues Asp222, Glu248, and Glu276 each coordinate Mg(2+). His325 serves as the catalytic Proton acceptor. A substrate-binding site is contributed by Glu345.

Belongs to the mandelate racemase/muconate lactonizing enzyme family. RhamD subfamily. As to quaternary structure, homooctamer; tetramer of dimers. It depends on Mg(2+) as a cofactor.

It catalyses the reaction L-rhamnonate = 2-dehydro-3-deoxy-L-rhamnonate + H2O. Its function is as follows. Catalyzes the dehydration of L-rhamnonate to 2-keto-3-deoxy-L-rhamnonate (KDR). The chain is L-rhamnonate dehydratase from Escherichia coli O157:H7.